The sequence spans 1493 residues: Protein Shroom4 (1493 aa).

The PDZ domain occupies Y10–N92. The disordered stretch occupies residues C202–S282. 2 stretches are compositionally biased toward polar residues: residues A234–T243 and T249–Y262. Position 411 is a phosphoserine (S411). Positions G430 to S695 are disordered. Basic and acidic residues-rich tracts occupy residues Q470 to S484 and G498 to F509. The span at N513–A547 shows a compositional bias: polar residues. S729 bears the Phosphoserine mark. Disordered regions lie at residues A740 to A759 and S781 to P813. Over residues K782–Q802 the composition is skewed to polar residues. Phosphoserine is present on S1019. Disordered regions lie at residues A1117–G1170, S1187–E1206, D1214–Y1236, and G1246–G1265. Over residues A1118–K1129 the composition is skewed to low complexity. Positions E1132–L1159 are enriched in acidic residues. The 280-residue stretch at S1213–N1492 folds into the ASD2 domain. Positions L1382 to L1488 form a coiled coil.

It belongs to the shroom family. As to quaternary structure, interacts directly with F-actin. In terms of tissue distribution, expressed in all fetal and adult tissues investigated. Expressed in adult heart, brain, placenta, lung, liver, skeletal muscle, kidney and pancreas. In brain regions detected in cerebellum, cerebral cortex, medulla, spinal cord, occipital pole, frontal lobe, temporal lobe and putamen. The expression is strongest in the medulla and weakest in the cerebral cortex.

The protein resides in the cytoplasm. Its subcellular location is the cytoskeleton. In terms of biological role, probable regulator of cytoskeletal architecture that plays an important role in development. May regulate cellular and cytoskeletal architecture by modulating the spatial distribution of myosin II. The chain is Protein Shroom4 (SHROOM4) from Homo sapiens (Human).